A 382-amino-acid chain; its full sequence is Per os infectivity factor 2 (382 aa).

Forms the PIF complex together with PIF1 and PIF3. The complex also interacts with per os infectivity factor PIF0.

In terms of biological role, per os infectivity factor that mediates the specific binding of occluded virions (ODV) to the host midgut target cells. In Autographa californica nuclear polyhedrosis virus (AcMNPV), this protein is Per os infectivity factor 2.